Reading from the N-terminus, the 396-residue chain is NASP-related protein sim3 (396 aa).

Residues 1-31 (MSSDTKTLENSKGNSATDADTKNPSSSDSRA) form a disordered region. TPR repeat units lie at residues 32–65 (IEQLVTQGNMAYAQKNYEEAVDKYGQALMQSESI) and 89–122 (IENSQVLGNALGAKESVSQATESFEEPEAIGSFT). The interval 135–164 (NEENSSIAHPEKESEEKETNEASPASEEDE) is disordered. The span at 143 to 154 (HPEKESEEKETN) shows a compositional bias: basic and acidic residues. The stretch at 199–232 (ADIYDLLGELSLEIENFSQASQDLKTALEWKEKV) is one TPR 3 repeat. Residues 267–329 (CEHVEKAAEI…QKTLDLKHGA (63 aa)) are a coiled coil. Positions 284–301 (RENEVTDKKGKGKQKAEE) are enriched in basic and acidic residues. Disordered stretches follow at residues 284–307 (RENEVTDKKGKGKQKAEESTLTSD) and 334–396 (EAVM…KKKD). Low complexity predominate over residues 343–353 (SSLLSKDSSSL).

The protein belongs to the NASP family. Interacts with cnp1, hht1, hht2 and hht3; has a preference for CENP-A (cnp1) over histone H3 (hht1/2/3).

It localises to the nucleus. Histone H3 and H3-like CENP-A-specific chaperone. Promotes delivery and incorporation of CENP-A in centromeric chromatin, probably by escorting nascent CENP-A to CENP-A chromatin assembly factors. Required for central core silencing and normal chromosome segregation. The chain is NASP-related protein sim3 (sim3) from Schizosaccharomyces pombe (strain 972 / ATCC 24843) (Fission yeast).